Here is a 33-residue protein sequence, read N- to C-terminus: uncharacterized protein (33 aa).

It is found in the cytoplasm. The protein localises to the nucleus. This is an uncharacterized protein from Schizosaccharomyces pombe (strain 972 / ATCC 24843) (Fission yeast).